A 241-amino-acid polypeptide reads, in one-letter code: Glucosamine-6-phosphate deaminase (241 aa).

Residue aspartate 67 is the Proton acceptor; for enolization step of the active site. Asparagine 136 functions as the For ring-opening step in the catalytic mechanism. Catalysis depends on histidine 138, which acts as the Proton acceptor; for ring-opening step. Glutamate 143 functions as the For ring-opening step in the catalytic mechanism.

Belongs to the glucosamine/galactosamine-6-phosphate isomerase family. NagB subfamily.

The catalysed reaction is alpha-D-glucosamine 6-phosphate + H2O = beta-D-fructose 6-phosphate + NH4(+). It functions in the pathway amino-sugar metabolism; N-acetylneuraminate degradation; D-fructose 6-phosphate from N-acetylneuraminate: step 5/5. Functionally, catalyzes the reversible isomerization-deamination of glucosamine 6-phosphate (GlcN6P) to form fructose 6-phosphate (Fru6P) and ammonium ion. This chain is Glucosamine-6-phosphate deaminase, found in Bacillus velezensis (strain DSM 23117 / BGSC 10A6 / LMG 26770 / FZB42) (Bacillus amyloliquefaciens subsp. plantarum).